The sequence spans 261 residues: Imidazole glycerol phosphate synthase subunit HisF (261 aa).

Catalysis depends on residues Asp16 and Asp135.

Belongs to the HisA/HisF family. As to quaternary structure, heterodimer of HisH and HisF.

The protein resides in the cytoplasm. The enzyme catalyses 5-[(5-phospho-1-deoxy-D-ribulos-1-ylimino)methylamino]-1-(5-phospho-beta-D-ribosyl)imidazole-4-carboxamide + L-glutamine = D-erythro-1-(imidazol-4-yl)glycerol 3-phosphate + 5-amino-1-(5-phospho-beta-D-ribosyl)imidazole-4-carboxamide + L-glutamate + H(+). It participates in amino-acid biosynthesis; L-histidine biosynthesis; L-histidine from 5-phospho-alpha-D-ribose 1-diphosphate: step 5/9. Its function is as follows. IGPS catalyzes the conversion of PRFAR and glutamine to IGP, AICAR and glutamate. The HisF subunit catalyzes the cyclization activity that produces IGP and AICAR from PRFAR using the ammonia provided by the HisH subunit. This is Imidazole glycerol phosphate synthase subunit HisF from Mycolicibacterium vanbaalenii (strain DSM 7251 / JCM 13017 / BCRC 16820 / KCTC 9966 / NRRL B-24157 / PYR-1) (Mycobacterium vanbaalenii).